A 346-amino-acid polypeptide reads, in one-letter code: N-acetyl-gamma-glutamyl-phosphate reductase (346 aa).

Cys-154 is a catalytic residue.

This sequence belongs to the NAGSA dehydrogenase family. Type 1 subfamily.

It localises to the cytoplasm. The catalysed reaction is N-acetyl-L-glutamate 5-semialdehyde + phosphate + NADP(+) = N-acetyl-L-glutamyl 5-phosphate + NADPH + H(+). Its pathway is amino-acid biosynthesis; L-arginine biosynthesis; N(2)-acetyl-L-ornithine from L-glutamate: step 3/4. Catalyzes the NADPH-dependent reduction of N-acetyl-5-glutamyl phosphate to yield N-acetyl-L-glutamate 5-semialdehyde. The sequence is that of N-acetyl-gamma-glutamyl-phosphate reductase from Rhodopirellula baltica (strain DSM 10527 / NCIMB 13988 / SH1).